The sequence spans 146 residues: Cytochrome c-556 (146 aa).

Positions 1–24 are cleaved as a signal peptide; that stretch reads MCMKLKTITAAMLFGCLCAGAVYA. The heme c site is built by Met-35, Cys-135, Cys-138, and His-139.

Monomer. In terms of processing, binds 1 heme c group covalently per subunit.

Low-spin monoheme cytochrome c. This chain is Cytochrome c-556, found in Agrobacterium fabrum (strain C58 / ATCC 33970) (Agrobacterium tumefaciens (strain C58)).